Consider the following 122-residue polypeptide: UPF0102 protein CKL_1410 (122 aa).

This sequence belongs to the UPF0102 family.

This Clostridium kluyveri (strain ATCC 8527 / DSM 555 / NBRC 12016 / NCIMB 10680 / K1) protein is UPF0102 protein CKL_1410.